A 664-amino-acid chain; its full sequence is Translation factor GUF1, mitochondrial (664 aa).

The 184-residue stretch at 63-246 (SNYRNFSIVA…SIINNIPPPQ (184 aa)) folds into the tr-type G domain. GTP contacts are provided by residues 72–79 (AHVDHGKS), 139–143 (DTPGH), and 193–196 (NKID).

This sequence belongs to the TRAFAC class translation factor GTPase superfamily. Classic translation factor GTPase family. LepA subfamily.

The protein localises to the mitochondrion inner membrane. The enzyme catalyses GTP + H2O = GDP + phosphate + H(+). Functionally, promotes mitochondrial protein synthesis. May act as a fidelity factor of the translation reaction, by catalyzing a one-codon backward translocation of tRNAs on improperly translocated ribosomes. Binds to mitochondrial ribosomes in a GTP-dependent manner. This Clavispora lusitaniae (strain ATCC 42720) (Yeast) protein is Translation factor GUF1, mitochondrial.